The following is a 484-amino-acid chain: Fork head protein homolog 1 (484 aa).

In terms of domain architecture, FHA spans 76-142; sequence VTIGRNTDSL…NGAKVNFRRI (67 aa). A DNA-binding region (fork-head) is located at residues 302 to 393; the sequence is IKPPQSYASM…RRDFLNKWNA (92 aa).

As to quaternary structure, interacts (via FHA domain) with ECM30, GLN3, URE2, MPH1 AND FDO1. Interacts with the origin recognition complex (ORC) composed of ORC1 to ORC6.

The protein localises to the nucleus. It is found in the cytoplasm. Its subcellular location is the cytosol. Its function is as follows. Transcription factor that regulates the expression of the CLB2 cluster of genes during the G2/M phase of the mitotic cell cycle. The CLB2 cluster of genes includes mitotic regulators such as CLB1, CLB2, CDC5 and CDC20 as well as SWI5 and ACE2, transcription factors required for the subsequent temporal wave of cell cycle regulated gene expression in the M/G1 phase interval. Involved in HMRa silencing. FKH1 and FKH2 associate with the coding regions of active genes and influence, in opposing ways, transcriptional elongation and termination, and coordinate early transcription elongation and pre-mRNA processing. Both FKH1 and FKH2 play a role as regulators of lifespan in collaboration with the anaphase-promoting complex (APC), likely through combined regulation of stress response, genomic stability, and cell cycle regulation. FKH1 and FKH2 function also in controlling yeast cell morphology by preventing preudohyphal growth. Acts as a rate-limiting replication origin activator via its interaction with the origin recognition complex (ORC). Plays a transcription-independent role in recombination donor preference during mating-type switching through binding to the recombination enhancer (RE), a 700-bp cis-acting element that controls recombination along the left arm of chromosome III. In Saccharomyces cerevisiae (strain ATCC 204508 / S288c) (Baker's yeast), this protein is Fork head protein homolog 1.